A 467-amino-acid polypeptide reads, in one-letter code: uncharacterized protein (467 aa).

Residues 1-60 (MVRVSRGCQSCVDAKLQSTPSPSPSKSPSPTESPEQCLQKRQSGEQVVLPSRPFPRTSPR) are disordered.

Involved in osmoadaptation. This is an uncharacterized protein from Emericella nidulans (strain FGSC A4 / ATCC 38163 / CBS 112.46 / NRRL 194 / M139) (Aspergillus nidulans).